Consider the following 376-residue polypeptide: Ribosomal RNA large subunit methyltransferase G (376 aa).

It belongs to the methyltransferase superfamily. RlmG family.

It is found in the cytoplasm. It carries out the reaction guanosine(1835) in 23S rRNA + S-adenosyl-L-methionine = N(2)-methylguanosine(1835) in 23S rRNA + S-adenosyl-L-homocysteine + H(+). Its function is as follows. Specifically methylates the guanine in position 1835 (m2G1835) of 23S rRNA. The sequence is that of Ribosomal RNA large subunit methyltransferase G from Cronobacter sakazakii (strain ATCC BAA-894) (Enterobacter sakazakii).